The sequence spans 286 residues: Probable protein VP2 (286 aa).

Disordered stretches follow at residues 67-108 (LPAA…GPED) and 184-286 (QAAR…GGGI). Residues 222-241 (GKTRSRRKAGRKAQRKRRRP) are compositionally biased toward basic residues. The span at 242 to 265 (SPSSSSSSCSNSESWESNSDSCST) shows a compositional bias: low complexity.

Phosphorylated at C-terminal serines.

This Homo sapiens (Human) protein is Probable protein VP2.